Here is a 404-residue protein sequence, read N- to C-terminus: Argininosuccinate synthase (404 aa).

Residues Ala-10–Ser-18 and Ala-38 each bind ATP. Tyr-89 serves as a coordination point for L-citrulline. Gly-119 provides a ligand contact to ATP. Thr-121, Asn-125, and Asp-126 together coordinate L-aspartate. Asn-125 contacts L-citrulline. Arg-129, Ser-177, Ser-186, Glu-262, and Tyr-274 together coordinate L-citrulline.

It belongs to the argininosuccinate synthase family. Type 1 subfamily. Homotetramer.

Its subcellular location is the cytoplasm. The enzyme catalyses L-citrulline + L-aspartate + ATP = 2-(N(omega)-L-arginino)succinate + AMP + diphosphate + H(+). It functions in the pathway amino-acid biosynthesis; L-arginine biosynthesis; L-arginine from L-ornithine and carbamoyl phosphate: step 2/3. The sequence is that of Argininosuccinate synthase from Prochlorococcus marinus (strain AS9601).